A 445-amino-acid chain; its full sequence is tRNA-2-methylthio-N(6)-dimethylallyladenosine synthase (445 aa).

One can recognise an MTTase N-terminal domain in the interval lysine 3–arginine 124. Cysteine 12, cysteine 48, cysteine 87, cysteine 162, cysteine 166, and cysteine 169 together coordinate [4Fe-4S] cluster. Residues tyrosine 148–alanine 380 form the Radical SAM core domain. The region spanning glutamate 383–leucine 445 is the TRAM domain.

The protein belongs to the methylthiotransferase family. MiaB subfamily. In terms of assembly, monomer. Requires [4Fe-4S] cluster as cofactor.

The protein localises to the cytoplasm. The enzyme catalyses N(6)-dimethylallyladenosine(37) in tRNA + (sulfur carrier)-SH + AH2 + 2 S-adenosyl-L-methionine = 2-methylsulfanyl-N(6)-dimethylallyladenosine(37) in tRNA + (sulfur carrier)-H + 5'-deoxyadenosine + L-methionine + A + S-adenosyl-L-homocysteine + 2 H(+). Functionally, catalyzes the methylthiolation of N6-(dimethylallyl)adenosine (i(6)A), leading to the formation of 2-methylthio-N6-(dimethylallyl)adenosine (ms(2)i(6)A) at position 37 in tRNAs that read codons beginning with uridine. This is tRNA-2-methylthio-N(6)-dimethylallyladenosine synthase from Rickettsia akari (strain Hartford).